Consider the following 264-residue polypeptide: Type III pantothenate kinase 2 (264 aa).

6-13 is a binding site for ATP; that stretch reads DVGNTFTV. Substrate-binding positions include tyrosine 100 and 107 to 110; that span reads GADR. Residue aspartate 109 is the Proton acceptor of the active site. Aspartate 129 is a binding site for K(+). Threonine 132 provides a ligand contact to ATP. Threonine 184 provides a ligand contact to substrate.

Belongs to the type III pantothenate kinase family. Homodimer. NH4(+) is required as a cofactor. Requires K(+) as cofactor.

The protein localises to the cytoplasm. It carries out the reaction (R)-pantothenate + ATP = (R)-4'-phosphopantothenate + ADP + H(+). It functions in the pathway cofactor biosynthesis; coenzyme A biosynthesis; CoA from (R)-pantothenate: step 1/5. Functionally, catalyzes the phosphorylation of pantothenate (Pan), the first step in CoA biosynthesis. The sequence is that of Type III pantothenate kinase 2 from Symbiobacterium thermophilum (strain DSM 24528 / JCM 14929 / IAM 14863 / T).